An 862-amino-acid polypeptide reads, in one-letter code: C-type lectin domain-containing protein 161 (862 aa).

Residues 1–20 (MYRRTTLWFLLLFQPILVFA) form the signal peptide. Asn-22 and Asn-91 each carry an N-linked (GlcNAc...) asparagine glycan. Residues 41 to 154 (SLNACFKLYN…VGQKLPFVCT (114 aa)) enclose the C-type lectin 1 domain. Cysteines 62 and 153 form a disulfide. The interval 162–291 (AGPAPVHAMR…SDESSDEAYD (130 aa)) is disordered. The span at 198–218 (SDKKEKKEVASDKKKESKKDE) shows a compositional bias: basic and acidic residues. A glycan (N-linked (GlcNAc...) asparagine) is linked at Asn-222. A compositionally biased stretch (basic and acidic residues) spans 242–252 (SDKKESSKKDE). N-linked (GlcNAc...) asparagine glycosylation is found at Asn-258, Asn-279, and Asn-352. Over residues 265 to 283 (ANAEMSASISASSANSSSD) the composition is skewed to low complexity. Disordered stretches follow at residues 377–437 (MTMR…SASL), 450–469 (ALAS…QKSA), and 474–504 (AVVS…IDES). Low complexity predominate over residues 388–418 (SSSNTDSESASISESSQASEQAVMAAAMSAK). Basic and acidic residues-rich tracts occupy residues 455 to 467 (SKSD…KDQK) and 478 to 491 (ENKH…DPKS). An N-linked (GlcNAc...) asparagine glycan is attached at Asn-559. 2 consecutive C-type lectin domains span residues 562-687 (APAL…SVLC) and 716-828 (KNGK…FVSV). A disulfide bond links Cys-653 and Cys-678. Asn-765 carries an N-linked (GlcNAc...) asparagine glycan. Cysteines 807 and 819 form a disulfide. Residues Asn-831 and Asn-857 are each glycosylated (N-linked (GlcNAc...) asparagine).

Its subcellular location is the secreted. The chain is C-type lectin domain-containing protein 161 (clec-161) from Caenorhabditis elegans.